We begin with the raw amino-acid sequence, 618 residues long: uncharacterized protein (618 aa).

It to Rhizobium NGR234A y4qD.

This is an uncharacterized protein from Sinorhizobium fredii (strain NBRC 101917 / NGR234).